The following is a 221-amino-acid chain: Phosphate-specific transport system accessory protein PhoU homolog 1 (221 aa).

The protein belongs to the PhoU family. Homodimer.

The protein resides in the cytoplasm. In terms of biological role, plays a role in the regulation of phosphate uptake. In this role, it may bind, possibly as a chaperone, to PhoR, PhoP or a PhoR-PhoP complex to promote dephosphorylation of phospho-PhoP, or inhibit formation of the PhoR-PhoP transitory complex. The sequence is that of Phosphate-specific transport system accessory protein PhoU homolog 1 (phoU1) from Mycobacterium bovis (strain ATCC BAA-935 / AF2122/97).